Consider the following 336-residue polypeptide: Dihydroorotate dehydrogenase (quinone) (336 aa).

Residues A62 to K66 and T86 each bind FMN. Residue K66 coordinates substrate. N111–F115 is a substrate binding site. Residues N139 and N172 each contribute to the FMN site. Residue N172 coordinates substrate. The active-site Nucleophile is S175. Residue N177 coordinates substrate. Residues K217 and T245 each coordinate FMN. Substrate is bound at residue N246 to T247. Residues G268, G297, and Y318 to S319 each bind FMN.

Belongs to the dihydroorotate dehydrogenase family. Type 2 subfamily. As to quaternary structure, monomer. FMN is required as a cofactor.

It is found in the cell membrane. It catalyses the reaction (S)-dihydroorotate + a quinone = orotate + a quinol. It functions in the pathway pyrimidine metabolism; UMP biosynthesis via de novo pathway; orotate from (S)-dihydroorotate (quinone route): step 1/1. Its function is as follows. Catalyzes the conversion of dihydroorotate to orotate with quinone as electron acceptor. The protein is Dihydroorotate dehydrogenase (quinone) of Cronobacter sakazakii (strain ATCC BAA-894) (Enterobacter sakazakii).